A 292-amino-acid polypeptide reads, in one-letter code: uncharacterized protein (292 aa).

A helical transmembrane segment spans residues 13–35 (LFILFIIVVCIYLLPRVAINAFY).

Belongs to the serine esterase family.

Its subcellular location is the membrane. This is an uncharacterized protein from Salmonella typhimurium (strain LT2 / SGSC1412 / ATCC 700720).